A 285-amino-acid chain; its full sequence is Inositol oxygenase (285 aa).

Arginine 29 lines the substrate pocket. Position 33 is a phosphoserine (serine 33). 85–88 is a substrate binding site; sequence DESD. Residues histidine 98, histidine 123, and aspartate 124 each coordinate Fe cation. Substrate is bound by residues lysine 127 and 141–142; that span reads GD. Residues histidine 194, histidine 220, and aspartate 253 each coordinate Fe cation. Residue 220 to 221 participates in substrate binding; that stretch reads HS.

The protein belongs to the myo-inositol oxygenase family. It depends on Fe cation as a cofactor. In terms of tissue distribution, kidney specific. Renal proximal tubules.

It localises to the cytoplasm. The catalysed reaction is myo-inositol + O2 = D-glucuronate + H2O + H(+). The protein operates within polyol metabolism; myo-inositol degradation into D-glucuronate; D-glucuronate from myo-inositol: step 1/1. This chain is Inositol oxygenase (Miox), found in Mus musculus (Mouse).